Consider the following 108-residue polypeptide: MAEEFVQQRLTNNKVTIFVKFTCPFCRNALDILNKFSFKRGAYEIVDIKEFKPENKLHDYFEQITGGRTVPRIFFGKTSIGGYSDLLEIDNMDALGDILSSIGVLRTC.

Residues 3–106 (EEFVQQRLTN…DILSSIGVLR (104 aa)) form the Glutaredoxin domain. A disulfide bridge links cysteine 23 with cysteine 26.

This sequence belongs to the glutaredoxin family.

It localises to the virion. In terms of biological role, displays thioltransferase and dehydroascorbate reductase activities. This chain is Glutaredoxin-1 (OPG075), found in Variola virus (isolate Human/India/Ind3/1967) (VARV).